Consider the following 417-residue polypeptide: Inner membrane transport protein YnfM (417 aa).

Residues 1–22 form a disordered region; it reads MSRTTTVDGAPASDTDKQSISQ. At 1–38 the chain is on the periplasmic side; sequence MSRTTTVDGAPASDTDKQSISQPNQFIKRGTPQFMRVT. A helical transmembrane segment spans residues 39–59; that stretch reads LALFSAGLATFALLYCVQPIL. Over 60-73 the chain is Cytoplasmic; that stretch reads PVLSQEFGLTPANS. A helical transmembrane segment spans residues 74 to 94; it reads SISLSISTAMLAIGLLFTGPL. Residues 95–101 lie on the Periplasmic side of the membrane; that stretch reads SDAIGRK. The chain crosses the membrane as a helical span at residues 102 to 122; the sequence is PVMVTALLLASICTLLSTMMT. At 123–125 the chain is on the cytoplasmic side; sequence SWH. Residues 126–146 traverse the membrane as a helical segment; that stretch reads GILIMRALIGLSLSGVAAVGM. The Periplasmic portion of the chain corresponds to 147-152; the sequence is TYLSEE. Residues 153–173 traverse the membrane as a helical segment; it reads IHPSFVAFSMGLYISGNSIGG. The Cytoplasmic portion of the chain corresponds to 174–190; sequence MSGRLISGVFTDFFNWR. The chain crosses the membrane as a helical span at residues 191 to 211; the sequence is IALAAIGCFALASALMFWKIL. At 212–241 the chain is on the periplasmic side; it reads PESRHFRPTSLRPKTLFINFRLHWRDRGLP. A helical transmembrane segment spans residues 242 to 262; it reads LLFAEGFLLMGSFVTLFNYIG. Topologically, residues 263–264 are cytoplasmic; sequence YR. A helical membrane pass occupies residues 265 to 285; sequence LMLSPWHVSQAVVGLLSLAYL. Residues 286-315 are Periplasmic-facing; that stretch reads TGTWSSPKAGTMTTRYGRGPVMLFSTGVML. Residues 316 to 336 form a helical membrane-spanning segment; the sequence is FGLLMTLFSSLWLIFAGMLLF. The Cytoplasmic segment spans residues 337–364; the sequence is SAGFFAAHSVASSWIGPRAKRAKGQASS. A helical transmembrane segment spans residues 365-385; that stretch reads LYLFSYYLGSSIAGTLGGVFW. The Periplasmic segment spans residues 386–387; that stretch reads HN. A helical membrane pass occupies residues 388–408; the sequence is YGWNGVGAFIALMLVIALLVG. Residues 409-417 are Cytoplasmic-facing; that stretch reads TRLHRRLHA.

The protein belongs to the major facilitator superfamily.

The protein localises to the cell inner membrane. The protein is Inner membrane transport protein YnfM (ynfM) of Escherichia coli (strain K12).